Reading from the N-terminus, the 397-residue chain is Dual-specificity RNA methyltransferase RlmN (397 aa).

The active-site Proton acceptor is the E130. The Radical SAM core domain maps to 138–377 (VEDRGAVCIS…ASPIRTPRGR (240 aa)). The cysteines at positions 145 and 383 are disulfide-linked. 3 residues coordinate [4Fe-4S] cluster: C152, C156, and C159. S-adenosyl-L-methionine contacts are provided by residues 209–210 (GE), S241, 263–265 (SLH), and N340. C383 acts as the S-methylcysteine intermediate in catalysis.

This sequence belongs to the radical SAM superfamily. RlmN family. [4Fe-4S] cluster serves as cofactor.

It localises to the cytoplasm. It catalyses the reaction adenosine(2503) in 23S rRNA + 2 reduced [2Fe-2S]-[ferredoxin] + 2 S-adenosyl-L-methionine = 2-methyladenosine(2503) in 23S rRNA + 5'-deoxyadenosine + L-methionine + 2 oxidized [2Fe-2S]-[ferredoxin] + S-adenosyl-L-homocysteine. The enzyme catalyses adenosine(37) in tRNA + 2 reduced [2Fe-2S]-[ferredoxin] + 2 S-adenosyl-L-methionine = 2-methyladenosine(37) in tRNA + 5'-deoxyadenosine + L-methionine + 2 oxidized [2Fe-2S]-[ferredoxin] + S-adenosyl-L-homocysteine. Functionally, specifically methylates position 2 of adenine 2503 in 23S rRNA and position 2 of adenine 37 in tRNAs. m2A2503 modification seems to play a crucial role in the proofreading step occurring at the peptidyl transferase center and thus would serve to optimize ribosomal fidelity. The polypeptide is Dual-specificity RNA methyltransferase RlmN (Granulibacter bethesdensis (strain ATCC BAA-1260 / CGDNIH1)).